Consider the following 304-residue polypeptide: Glycine--tRNA ligase alpha subunit (304 aa).

Belongs to the class-II aminoacyl-tRNA synthetase family. In terms of assembly, tetramer of two alpha and two beta subunits.

The protein resides in the cytoplasm. The enzyme catalyses tRNA(Gly) + glycine + ATP = glycyl-tRNA(Gly) + AMP + diphosphate. The protein is Glycine--tRNA ligase alpha subunit of Vibrio atlanticus (strain LGP32) (Vibrio splendidus (strain Mel32)).